Reading from the N-terminus, the 522-residue chain is Putative thymidine phosphorylase (522 aa).

This sequence belongs to the thymidine/pyrimidine-nucleoside phosphorylase family. Type 2 subfamily.

The enzyme catalyses thymidine + phosphate = 2-deoxy-alpha-D-ribose 1-phosphate + thymine. The sequence is that of Putative thymidine phosphorylase from Albidiferax ferrireducens (strain ATCC BAA-621 / DSM 15236 / T118) (Rhodoferax ferrireducens).